A 233-amino-acid polypeptide reads, in one-letter code: NADP-dependent glyceraldehyde-3-phosphate dehydrogenase (233 aa).

7–8 is a binding site for substrate; it reads NY. Residues Lys-30 and Ser-33 each contribute to the NADP(+) site. An NAD(+)-binding site is contributed by 83–87; that stretch reads GGDTG. Catalysis depends on Glu-102, which acts as the Proton acceptor. 135–137 is a substrate binding site; it reads RCT. Residue Cys-136 is the Nucleophile of the active site. Glu-180 and Glu-229 together coordinate NADP(+).

The protein belongs to the aldehyde dehydrogenase family.

It localises to the cytoplasm. It catalyses the reaction D-glyceraldehyde 3-phosphate + NADP(+) + H2O = (2R)-3-phosphoglycerate + NADPH + 2 H(+). In terms of biological role, important as a means of generating NADPH for biosynthetic reactions. The polypeptide is NADP-dependent glyceraldehyde-3-phosphate dehydrogenase (GapN) (Scenedesmus vacuolatus (Green alga)).